The chain runs to 375 residues: 23S rRNA (uracil(747)-C(5))-methyltransferase RlmC (375 aa).

4 residues coordinate [4Fe-4S] cluster: cysteine 3, cysteine 11, cysteine 14, and cysteine 87. Positions 212, 241, 262, and 307 each coordinate S-adenosyl-L-methionine. Cysteine 334 acts as the Nucleophile in catalysis.

It belongs to the class I-like SAM-binding methyltransferase superfamily. RNA M5U methyltransferase family. RlmC subfamily.

It catalyses the reaction uridine(747) in 23S rRNA + S-adenosyl-L-methionine = 5-methyluridine(747) in 23S rRNA + S-adenosyl-L-homocysteine + H(+). In terms of biological role, catalyzes the formation of 5-methyl-uridine at position 747 (m5U747) in 23S rRNA. The polypeptide is 23S rRNA (uracil(747)-C(5))-methyltransferase RlmC (Escherichia coli O45:K1 (strain S88 / ExPEC)).